The chain runs to 109 residues: Sperm-specific class P protein 16 (109 aa).

In terms of domain architecture, MSP spans 2-109; sequence SLTADPPACT…TVTIPMSATA (108 aa).

As to expression, expressed at higher level in testis.

The chain is Sperm-specific class P protein 16 (ssp-16) from Caenorhabditis elegans.